Consider the following 210-residue polypeptide: Na(+)-translocating NADH-quinone reductase subunit D (210 aa).

Transmembrane regions (helical) follow at residues 42–62 (FVMT…VSLI), 72–92 (IIVQ…VLKA), 103–123 (VFVG…AFAM), 131–151 (LIDG…VGFF), and 178–198 (NGLM…IWVI).

Belongs to the NqrDE/RnfAE family. In terms of assembly, composed of six subunits; NqrA, NqrB, NqrC, NqrD, NqrE and NqrF.

It localises to the cell inner membrane. The enzyme catalyses a ubiquinone + n Na(+)(in) + NADH + H(+) = a ubiquinol + n Na(+)(out) + NAD(+). Its activity is regulated as follows. This reaction is tightly coupled to the Na(+) pumping activity and specifically requires Na(+) for activity. Inhibited by korormicin and 2-N-heptyl-4-hydroxyquinoline N-oxide (HQNO). Its function is as follows. NQR complex catalyzes the reduction of ubiquinone-1 to ubiquinol by two successive reactions, coupled with the transport of Na(+) ions from the cytoplasm to the periplasm. NqrA to NqrE are probably involved in the second step, the conversion of ubisemiquinone to ubiquinol. This chain is Na(+)-translocating NADH-quinone reductase subunit D, found in Vibrio alginolyticus.